We begin with the raw amino-acid sequence, 155 residues long: Small ribosomal subunit protein uS7 (155 aa).

This sequence belongs to the universal ribosomal protein uS7 family. In terms of assembly, part of the 30S ribosomal subunit. Contacts proteins S9 and S11.

In terms of biological role, one of the primary rRNA binding proteins, it binds directly to 16S rRNA where it nucleates assembly of the head domain of the 30S subunit. Is located at the subunit interface close to the decoding center, probably blocks exit of the E-site tRNA. This chain is Small ribosomal subunit protein uS7, found in Halorhodospira halophila (strain DSM 244 / SL1) (Ectothiorhodospira halophila (strain DSM 244 / SL1)).